Here is a 375-residue protein sequence, read N- to C-terminus: Alcohol dehydrogenase 1C (375 aa).

Residue Ser-2 is modified to N-acetylserine. Ser-23 bears the Phosphoserine mark. Positions 47, 68, 98, 101, 104, 112, and 175 each coordinate Zn(2+). Residues 200–205 (GLGGVG), Asp-224, Lys-229, Ile-270, 293–295 (VGV), 318–320 (AIF), and Arg-370 contribute to the NAD(+) site.

The protein belongs to the zinc-containing alcohol dehydrogenase family. As to quaternary structure, dimer of identical or non-identical chains of class I alcohol dehydrogenase: ADH1A, ADH1B, and ADH1C. The cofactor is Zn(2+). Expressed in kidney.

Its subcellular location is the cytoplasm. It catalyses the reaction a primary alcohol + NAD(+) = an aldehyde + NADH + H(+). The catalysed reaction is ethanol + NAD(+) = acetaldehyde + NADH + H(+). Functionally, alcohol dehydrogenase. Exhibits high activity for ethanol oxidation and plays a major role in ethanol catabolism. This is Alcohol dehydrogenase 1C (ADH1C) from Papio hamadryas (Hamadryas baboon).